We begin with the raw amino-acid sequence, 201 residues long: Prostamide/prostaglandin F synthase (201 aa).

The protein belongs to the peroxiredoxin-like PRXL2 family. Prostamide/prostaglandin F synthase subfamily.

The protein localises to the cytoplasm. The protein resides in the cytosol. The enzyme catalyses prostaglandin H2 + [thioredoxin]-dithiol = prostaglandin F2alpha + [thioredoxin]-disulfide. The catalysed reaction is prostamide F2alpha + [thioredoxin]-disulfide = prostamide H2 + [thioredoxin]-dithiol. In terms of biological role, catalyzes the reduction of prostaglandin-ethanolamide H(2) (prostamide H(2)) to prostamide F(2alpha) with NADPH as proton donor. Also able to reduce prostaglandin H(2) to prostaglandin F(2alpha). The chain is Prostamide/prostaglandin F synthase (prxl2b) from Xenopus laevis (African clawed frog).